We begin with the raw amino-acid sequence, 80 residues long: Conotoxin Bu14 (80 aa).

Positions 1–8 (AACQLGTA) are cleaved as a signal peptide. A propeptide spanning residues 9–40 (ASFARDKQDYPAVRSDGRQDSKDSTLDRIAKR) is cleaved from the precursor. 3 disulfides stabilise this stretch: Cys-41-Cys-55, Cys-48-Cys-59, and Cys-54-Cys-69.

This sequence belongs to the conotoxin O1 superfamily. In terms of tissue distribution, expressed by the venom duct.

It is found in the secreted. This is Conotoxin Bu14 from Conus bullatus (Bubble cone).